We begin with the raw amino-acid sequence, 538 residues long: Chaperonin GroEL (538 aa).

Residues 29-32, 86-90, G413, 476-478, and D492 contribute to the ATP site; these read TIGP, DGTTT, and NAA.

It belongs to the chaperonin (HSP60) family. In terms of assembly, forms a cylinder of 14 subunits composed of two heptameric rings stacked back-to-back. Interacts with the co-chaperonin GroES.

The protein localises to the cytoplasm. It carries out the reaction ATP + H2O + a folded polypeptide = ADP + phosphate + an unfolded polypeptide.. Its function is as follows. Together with its co-chaperonin GroES, plays an essential role in assisting protein folding. The GroEL-GroES system forms a nano-cage that allows encapsulation of the non-native substrate proteins and provides a physical environment optimized to promote and accelerate protein folding. The sequence is that of Chaperonin GroEL from Staphylococcus aureus (strain MRSA252).